The chain runs to 457 residues: Siroheme synthase (457 aa).

Residues 1–204 are precorrin-2 dehydrogenase /sirohydrochlorin ferrochelatase; sequence MDHLPIFCQL…NDQKAITETT (204 aa). NAD(+) is bound by residues 22–23 and 43–44; these read DV and LA. Ser-128 carries the post-translational modification Phosphoserine. The segment at 216–457 is uroporphyrinogen-III C-methyltransferase; the sequence is GEVVLVGAGP…RDKLNWFSNH (242 aa). Residue Pro-225 participates in S-adenosyl-L-methionine binding. Asp-248 functions as the Proton acceptor in the catalytic mechanism. The active-site Proton donor is the Lys-270. Residues 301–303, Ile-306, 331–332, Met-382, and Gly-411 each bind S-adenosyl-L-methionine; these read GGD and TA.

In the N-terminal section; belongs to the precorrin-2 dehydrogenase / sirohydrochlorin ferrochelatase family. It in the C-terminal section; belongs to the precorrin methyltransferase family.

The enzyme catalyses uroporphyrinogen III + 2 S-adenosyl-L-methionine = precorrin-2 + 2 S-adenosyl-L-homocysteine + H(+). It carries out the reaction precorrin-2 + NAD(+) = sirohydrochlorin + NADH + 2 H(+). The catalysed reaction is siroheme + 2 H(+) = sirohydrochlorin + Fe(2+). Its pathway is cofactor biosynthesis; adenosylcobalamin biosynthesis; precorrin-2 from uroporphyrinogen III: step 1/1. It functions in the pathway cofactor biosynthesis; adenosylcobalamin biosynthesis; sirohydrochlorin from precorrin-2: step 1/1. It participates in porphyrin-containing compound metabolism; siroheme biosynthesis; precorrin-2 from uroporphyrinogen III: step 1/1. The protein operates within porphyrin-containing compound metabolism; siroheme biosynthesis; siroheme from sirohydrochlorin: step 1/1. Its pathway is porphyrin-containing compound metabolism; siroheme biosynthesis; sirohydrochlorin from precorrin-2: step 1/1. Multifunctional enzyme that catalyzes the SAM-dependent methylations of uroporphyrinogen III at position C-2 and C-7 to form precorrin-2 via precorrin-1. Then it catalyzes the NAD-dependent ring dehydrogenation of precorrin-2 to yield sirohydrochlorin. Finally, it catalyzes the ferrochelation of sirohydrochlorin to yield siroheme. This chain is Siroheme synthase, found in Shigella boydii serotype 18 (strain CDC 3083-94 / BS512).